Reading from the N-terminus, the 184-residue chain is Large ribosomal subunit protein bL9 (184 aa).

Positions 160–184 are disordered; it reads LQNQKSEQQEAEQDANKEAADGDDS. Positions 173 to 184 are enriched in basic and acidic residues; it reads DANKEAADGDDS.

This sequence belongs to the bacterial ribosomal protein bL9 family.

Binds to the 23S rRNA. The protein is Large ribosomal subunit protein bL9 of Wolbachia sp. subsp. Drosophila simulans (strain wRi).